The primary structure comprises 153 residues: Superoxide dismutase [Cu-Zn] (153 aa).

Cu cation is bound by residues histidine 45, histidine 47, and histidine 62. A disulfide bond links cysteine 56 and cysteine 145. Zn(2+)-binding residues include histidine 62, histidine 70, histidine 79, and aspartate 82. Histidine 119 lines the Cu cation pocket.

This sequence belongs to the Cu-Zn superoxide dismutase family. As to quaternary structure, homodimer. It depends on Cu cation as a cofactor. The cofactor is Zn(2+).

Its subcellular location is the cytoplasm. It catalyses the reaction 2 superoxide + 2 H(+) = H2O2 + O2. In terms of biological role, destroys radicals which are normally produced within the cells and which are toxic to biological systems. In Drosophila teissieri (Fruit fly), this protein is Superoxide dismutase [Cu-Zn].